The sequence spans 454 residues: Retinoblastoma-binding protein homolog 5 (454 aa).

WD repeat units lie at residues 23–64 (LQNA…RTFS), 65–104 (AHCL…LLHR), 153–192 (SSDE…CVAW), 196–235 (NTVQ…HQRG), 248–288 (VNKA…LIKI), and 292–330 (NKGE…NWSA).

As to quaternary structure, component of the SET2 complex (also known as the SET1/COMPASS complex), which contains at least set-2, swd-2.1, cfp-1, rbbp-5, wdr-5.1, dpy-30 and ash-2.

The protein resides in the nucleus. Functionally, required for di- and trimethylation at 'Lys-4' of histone H3. Regulates left/right asymmetry of ASE sensory neurons, via its role as a component of the SET2 complex. This is Retinoblastoma-binding protein homolog 5 (rbbp-5) from Caenorhabditis elegans.